The following is a 309-amino-acid chain: Porphobilinogen deaminase (309 aa).

Cys-244 is subject to S-(dipyrrolylmethanemethyl)cysteine.

The protein belongs to the HMBS family. Monomer. Requires dipyrromethane as cofactor.

The enzyme catalyses 4 porphobilinogen + H2O = hydroxymethylbilane + 4 NH4(+). It participates in porphyrin-containing compound metabolism; protoporphyrin-IX biosynthesis; coproporphyrinogen-III from 5-aminolevulinate: step 2/4. Tetrapolymerization of the monopyrrole PBG into the hydroxymethylbilane pre-uroporphyrinogen in several discrete steps. The polypeptide is Porphobilinogen deaminase (Listeria monocytogenes serovar 1/2a (strain ATCC BAA-679 / EGD-e)).